A 454-amino-acid chain; its full sequence is Probable spastin homolog Bm1_53365 (454 aa).

218–225 (GPPGNGKT) contributes to the ATP binding site.

The protein belongs to the AAA ATPase family. Spastin subfamily. Homohexamer. The homohexamer is stabilized by ATP-binding. The homohexamer may adopt a ring conformation through which microtubules pass prior to being severed. Interacts with microtubules.

The protein resides in the cytoplasm. It localises to the cytoskeleton. It is found in the perinuclear region. It catalyses the reaction n ATP + n H2O + a microtubule = n ADP + n phosphate + (n+1) alpha/beta tubulin heterodimers.. Severs microtubules, probably in an ATP-dependent fashion. This chain is Probable spastin homolog Bm1_53365, found in Brugia malayi (Filarial nematode worm).